The primary structure comprises 156 residues: Small ribosomal subunit protein uS7 (156 aa).

The protein belongs to the universal ribosomal protein uS7 family. Part of the 30S ribosomal subunit. Contacts proteins S9 and S11.

One of the primary rRNA binding proteins, it binds directly to 16S rRNA where it nucleates assembly of the head domain of the 30S subunit. Is located at the subunit interface close to the decoding center, probably blocks exit of the E-site tRNA. The polypeptide is Small ribosomal subunit protein uS7 (Microcystis aeruginosa (strain NIES-843 / IAM M-2473)).